The following is a 244-amino-acid chain: 5-oxoprolinase subunit A (244 aa).

Belongs to the LamB/PxpA family. In terms of assembly, forms a complex composed of PxpA, PxpB and PxpC.

It catalyses the reaction 5-oxo-L-proline + ATP + 2 H2O = L-glutamate + ADP + phosphate + H(+). Its function is as follows. Catalyzes the cleavage of 5-oxoproline to form L-glutamate coupled to the hydrolysis of ATP to ADP and inorganic phosphate. In Salmonella schwarzengrund (strain CVM19633), this protein is 5-oxoprolinase subunit A.